Consider the following 865-residue polypeptide: DNA topoisomerase 1 (865 aa).

A Toprim domain is found at 3–142; the sequence is KALVIVESPA…RYSRVVFNEI (140 aa). E9 serves as a coordination point for Mg(2+). The tract at residues 37–65 is disordered; sequence LPTSGSAAKKSADSTSTKTAKKPKKDERG. A compositionally biased stretch (low complexity) spans 39 to 54; that stretch reads TSGSAAKKSADSTSTK. D111 lines the Mg(2+) pocket. One can recognise a Topo IA-type catalytic domain in the interval 158–575; it reads NIDRVNAQQA…HFFSDFTQQL (418 aa). Residues 192-197 form an interaction with DNA region; it reads SAGRVQ. The active-site O-(5'-phospho-DNA)-tyrosine intermediate is Y319. 3 consecutive C4-type zinc fingers follow at residues 599-630, 662-689, and 711-736; these read CPTC…KERC, CPKC…NPTC, and CEKC…NEEC.

It belongs to the type IA topoisomerase family. In terms of assembly, monomer. The cofactor is Mn(2+). Ca(2+) is required as a cofactor.

The enzyme catalyses ATP-independent breakage of single-stranded DNA, followed by passage and rejoining.. Functionally, releases the supercoiling and torsional tension of DNA, which is introduced during the DNA replication and transcription, by transiently cleaving and rejoining one strand of the DNA duplex. Introduces a single-strand break via transesterification at a target site in duplex DNA. The scissile phosphodiester is attacked by the catalytic tyrosine of the enzyme, resulting in the formation of a DNA-(5'-phosphotyrosyl)-enzyme intermediate and the expulsion of a 3'-OH DNA strand. The free DNA strand then undergoes passage around the unbroken strand, thus removing DNA supercoils. Finally, in the religation step, the DNA 3'-OH attacks the covalent intermediate to expel the active-site tyrosine and restore the DNA phosphodiester backbone. This is DNA topoisomerase 1 from Escherichia coli (strain K12).